A 267-amino-acid polypeptide reads, in one-letter code: Diphthine--ammonia ligase (267 aa).

The residue at position 97 (Y97) is a Phosphotyrosine.

Belongs to the Diphthine--ammonia ligase family.

It catalyses the reaction diphthine-[translation elongation factor 2] + NH4(+) + ATP = diphthamide-[translation elongation factor 2] + AMP + diphosphate + H(+). It functions in the pathway protein modification; peptidyl-diphthamide biosynthesis. In terms of biological role, amidase that catalyzes the last step of diphthamide biosynthesis using ammonium and ATP. Diphthamide biosynthesis consists in the conversion of an L-histidine residue in the translation elongation factor eEF-2 (EEF2) to diphthamide. In Bos taurus (Bovine), this protein is Diphthine--ammonia ligase (DPH6).